Here is a 1393-residue protein sequence, read N- to C-terminus: Rab3 GTPase-activating protein non-catalytic subunit (1393 aa).

A disordered region spans residues 36 to 67 (RDPSKSTDWEDDGWGAWEENEPQEPEEEGNTC). Phosphoserine is present on Ser-39. Residues 44–64 (WEDDGWGAWEENEPQEPEEEG) show a composition bias toward acidic residues. Ser-450 is modified (phosphoserine). Thr-901 carries the post-translational modification Phosphothreonine. Phosphoserine is present on residues Ser-916 and Ser-978.

It belongs to the Rab3-GAP regulatory subunit family. The Rab3 GTPase-activating complex is a heterodimer composed of RAB3GAP1 and RAB3GAP2. The Rab3 GTPase-activating complex interacts with DMXL2. Interacts with LMAN1. Ubiquitous.

The protein resides in the cytoplasm. The protein localises to the endoplasmic reticulum. Its function is as follows. Regulatory subunit of the Rab3 GTPase-activating (Rab3GAP) complex composed of RAB3GAP1 and RAB3GAP2, which has GTPase-activating protein (GAP) activity towards various Rab3 subfamily members (RAB3A, RAB3B, RAB3C and RAB3D), RAB5A and RAB43, and guanine nucleotide exchange factor (GEF) activity towards RAB18. As part of the Rab3GAP complex, acts as a GAP for Rab3 proteins by converting active RAB3-GTP to the inactive form RAB3-GDP. Rab3 proteins are involved in regulated exocytosis of neurotransmitters and hormones. The Rab3GAP complex acts as a GEF for RAB18 by promoting the conversion of inactive RAB18-GDP to the active form RAB18-GTP. Recruits and stabilizes RAB18 at the cis-Golgi membrane in human fibroblasts where RAB18 is most likely activated. Also involved in RAB18 recruitment at the endoplasmic reticulum (ER) membrane where it maintains proper ER structure. Required for normal eye and brain development. May participate in neurodevelopmental processes such as proliferation, migration and differentiation before synapse formation, and non-synaptic vesicular release of neurotransmitters. This chain is Rab3 GTPase-activating protein non-catalytic subunit, found in Homo sapiens (Human).